A 325-amino-acid polypeptide reads, in one-letter code: BES1/BZR1 homolog protein 4 (325 aa).

Positions 1–21 (MTSGTRMPTWRERENNKRRER) are disordered. A required for DNA-binding region spans residues 6–89 (RMPTWREREN…RMEIGGGSAT (84 aa)). Position 169 is a phosphothreonine (T169). The segment at 304–325 (ERIHEESGSDDLELTLGNSSTR) is disordered.

The protein belongs to the BZR/LAT61 family. Phosphorylated. Phosphorylation increases protein degradation.

The protein is BES1/BZR1 homolog protein 4 (BEH4) of Arabidopsis thaliana (Mouse-ear cress).